The chain runs to 862 residues: DNA mismatch repair protein MutS (862 aa).

608-615 (GPNMAGKS) is an ATP binding site.

Belongs to the DNA mismatch repair MutS family.

In terms of biological role, this protein is involved in the repair of mismatches in DNA. It is possible that it carries out the mismatch recognition step. This protein has a weak ATPase activity. The protein is DNA mismatch repair protein MutS of Bacteroides thetaiotaomicron (strain ATCC 29148 / DSM 2079 / JCM 5827 / CCUG 10774 / NCTC 10582 / VPI-5482 / E50).